A 439-amino-acid chain; its full sequence is Probable serine/threonine-protein kinase WNK6 (439 aa).

The segment at 1-30 (MMPPKPAAEDVADEQPEPPDEDPDVAEADP) is disordered. Over residues 10 to 27 (DVADEQPEPPDEDPDVAE) the composition is skewed to acidic residues. In terms of domain architecture, Protein kinase spans 35 to 293 (LRYREIIGSG…ASELLKSPFL (259 aa)). Residues 116–119 (TELF) and lysine 166 each bind ATP. Catalysis depends on aspartate 183, which acts as the Proton acceptor.

It belongs to the protein kinase superfamily. Ser/Thr protein kinase family. WNK subfamily.

It carries out the reaction L-seryl-[protein] + ATP = O-phospho-L-seryl-[protein] + ADP + H(+). The catalysed reaction is L-threonyl-[protein] + ATP = O-phospho-L-threonyl-[protein] + ADP + H(+). In Oryza sativa subsp. japonica (Rice), this protein is Probable serine/threonine-protein kinase WNK6 (WNK6).